The chain runs to 357 residues: Arginine kinase Scy p 2.0101 (357 aa).

A Phosphagen kinase N-terminal domain is found at 9 to 91; the sequence is KLEEGFKKLE…FDPIIEDYHK (83 aa). 64-68 provides a ligand contact to L-arginine; the sequence is GVGVY. IgE-binding and beta-hexosaminidase release from rat basophilic leukemia (RBL) cells stretches follow at residues 113–127 and 127–155; these read VDPDGKFVISTRVRC and CGRSMEGYPFNPCLTEAQYKEMESKVSST. The Phosphagen kinase C-terminal domain maps to 119–356; that stretch reads FVISTRVRCG…LELIKIEKEM (238 aa). An ATP-binding site is contributed by 122-126; it reads STRVR. An ATP-binding site is contributed by His-185. Cys-201 and Cys-271 are disulfide-bonded. The interval 204–218 is igE-binding and beta-hexosaminidase release from rat basophilic leukemia (RBL) cells; that stretch reads WPTGRGIYHNDNKTF. The igE-binding, but no beta-hexosaminidase release from rat basophilic leukemia (RBL) cells stretch occupies residues 211–225; that stretch reads YHNDNKTFLVWCNEE. Glu-225 provides a ligand contact to L-arginine. Residue Arg-229 participates in ATP binding. Cys-271 contributes to the L-arginine binding site. ATP is bound by residues 280-284 and 309-314; these read RASVH and RGTRGE. Residue Glu-314 participates in L-arginine binding. The tract at residues 316 to 330 is igE-binding, but no beta-hexosaminidase release from rat basophilic leukemia (RBL) cells; it reads TEAEGGVYDISNKRR.

Belongs to the ATP:guanido phosphotransferase family. Glycosylated. Muscle (at protein level).

The catalysed reaction is L-arginine + ATP = N(omega)-phospho-L-arginine + ADP + H(+). Catalyzes the reversible transfer of high energy ATP gamma-phosphate group to L-arginine. The chain is Arginine kinase Scy p 2.0101 from Scylla paramamosain (Mud crab).